Here is a 425-residue protein sequence, read N- to C-terminus: Serine--tRNA ligase (425 aa).

232-234 (TSE) contributes to the L-serine binding site. ATP contacts are provided by residues 263 to 265 (RRE) and Val279. Residue Glu286 participates in L-serine binding. An ATP-binding site is contributed by 350–353 (EVVS). Thr387 contacts L-serine.

This sequence belongs to the class-II aminoacyl-tRNA synthetase family. Type-1 seryl-tRNA synthetase subfamily. In terms of assembly, homodimer. The tRNA molecule binds across the dimer.

The protein resides in the cytoplasm. The catalysed reaction is tRNA(Ser) + L-serine + ATP = L-seryl-tRNA(Ser) + AMP + diphosphate + H(+). It carries out the reaction tRNA(Sec) + L-serine + ATP = L-seryl-tRNA(Sec) + AMP + diphosphate + H(+). The protein operates within aminoacyl-tRNA biosynthesis; selenocysteinyl-tRNA(Sec) biosynthesis; L-seryl-tRNA(Sec) from L-serine and tRNA(Sec): step 1/1. Catalyzes the attachment of serine to tRNA(Ser). Is also able to aminoacylate tRNA(Sec) with serine, to form the misacylated tRNA L-seryl-tRNA(Sec), which will be further converted into selenocysteinyl-tRNA(Sec). This Methanoregula boonei (strain DSM 21154 / JCM 14090 / 6A8) protein is Serine--tRNA ligase.